The sequence spans 939 residues: AP-2 complex subunit alpha-2 (939 aa).

A 1,2-diacyl-sn-glycero-3-phospho-(1D-myo-inositol-3,4,5-trisphosphate) is bound by residues 11–12 (RG), K43, Y53, and 57–61 (KYVCK). The interval 612–681 (LAKLKKKKGP…AGPPPSSGGS (70 aa)) is disordered. Residues 646 to 667 (PASTSAVSTPSPSADLLGLGAA) show a composition bias toward low complexity. The segment covering 668–677 (PPAPAGPPPS) has biased composition (pro residues).

The protein belongs to the adaptor complexes large subunit family. Adaptor protein complex 2 (AP-2) is a heterotetramer composed of two large adaptins (alpha-type subunit AP2A1 or AP2A2 and beta-type subunit AP2B1), a medium adaptin (mu-type subunit AP2M1) and a small adaptin (sigma-type subunit AP2S1). Binds EPN1, EPS15, AMPH, SNAP91 and BIN1. Interacts with HIP1. Interacts with DGKD. Interacts with DENND1A, DENND1B and DENND1C. Interacts with FCHO1 and DAB2. Interacts with ATAT1; this interaction is required for efficient alpha-tubulin acetylation by ATAT1. Interacts with KIAA1107. Together with AP2B1 and AP2M1, it interacts with ADAM10; this interaction facilitates ADAM10 endocytosis from the plasma membrane during long-term potentiation in hippocampal neurons. Interacts with CLN3 (via dileucine motif). Interacts with ABCB11; this interaction regulates cell membrane expression of ABCB11 through its internalization in a clathrin-dependent manner and its subsequent degradation. Interacts with Cacfd1. Interacts with DNAJC6. Expressed in the brain (at protein level).

The protein resides in the cell membrane. Its subcellular location is the membrane. It localises to the coated pit. Its function is as follows. Component of the adaptor protein complex 2 (AP-2). Adaptor protein complexes function in protein transport via transport vesicles in different membrane traffic pathways. Adaptor protein complexes are vesicle coat components and appear to be involved in cargo selection and vesicle formation. AP-2 is involved in clathrin-dependent endocytosis in which cargo proteins are incorporated into vesicles surrounded by clathrin (clathrin-coated vesicles, CCVs) which are destined for fusion with the early endosome. The clathrin lattice serves as a mechanical scaffold but is itself unable to bind directly to membrane components. Clathrin-associated adaptor protein (AP) complexes which can bind directly to both the clathrin lattice and to the lipid and protein components of membranes are considered to be the major clathrin adaptors contributing the CCV formation. AP-2 also serves as a cargo receptor to selectively sort the membrane proteins involved in receptor-mediated endocytosis. AP-2 seems to play a role in the recycling of synaptic vesicle membranes from the presynaptic surface. AP-2 recognizes Y-X-X-[FILMV] (Y-X-X-Phi) and [ED]-X-X-X-L-[LI] endocytosis signal motifs within the cytosolic tails of transmembrane cargo molecules. AP-2 may also play a role in maintaining normal post-endocytic trafficking through the ARF6-regulated, non-clathrin pathway. During long-term potentiation in hippocampal neurons, AP-2 is responsible for the endocytosis of ADAM10. The AP-2 alpha subunit binds polyphosphoinositide-containing lipids, positioning AP-2 on the membrane. The AP-2 alpha subunit acts via its C-terminal appendage domain as a scaffolding platform for endocytic accessory proteins. The AP-2 alpha and AP-2 sigma subunits are thought to contribute to the recognition of the [ED]-X-X-X-L-[LI] motif. The sequence is that of AP-2 complex subunit alpha-2 (AP2A2) from Homo sapiens (Human).